Here is a 398-residue protein sequence, read N- to C-terminus: Succinate--CoA ligase [ADP-forming] subunit beta (398 aa).

The 246-residue stretch at 9–254 (KALLKSYGAP…TTEEDEKEIE (246 aa)) folds into the ATP-grasp domain. ATP is bound by residues Lys-46, 53–55 (GRG), Glu-109, Ala-112, and Glu-117. Mg(2+) is bound by residues Asn-209 and Asp-223. Substrate contacts are provided by residues Asn-274 and 331 to 333 (GIM).

This sequence belongs to the succinate/malate CoA ligase beta subunit family. In terms of assembly, heterotetramer of two alpha and two beta subunits. It depends on Mg(2+) as a cofactor.

The catalysed reaction is succinate + ATP + CoA = succinyl-CoA + ADP + phosphate. It catalyses the reaction GTP + succinate + CoA = succinyl-CoA + GDP + phosphate. Its pathway is carbohydrate metabolism; tricarboxylic acid cycle; succinate from succinyl-CoA (ligase route): step 1/1. Its function is as follows. Succinyl-CoA synthetase functions in the citric acid cycle (TCA), coupling the hydrolysis of succinyl-CoA to the synthesis of either ATP or GTP and thus represents the only step of substrate-level phosphorylation in the TCA. The beta subunit provides nucleotide specificity of the enzyme and binds the substrate succinate, while the binding sites for coenzyme A and phosphate are found in the alpha subunit. This is Succinate--CoA ligase [ADP-forming] subunit beta from Sinorhizobium medicae (strain WSM419) (Ensifer medicae).